The chain runs to 101 residues: MAAKLKKGDRVVVLAGKDKGKQGEITAVMPKDNKAVVEGVNVAIRHTKQTPTAQGGRLAKAMPIDLSNLALLDANGKATRVGFRFEGEKKVRYAKTTGDVI.

The protein belongs to the universal ribosomal protein uL24 family. As to quaternary structure, part of the 50S ribosomal subunit.

Its function is as follows. One of two assembly initiator proteins, it binds directly to the 5'-end of the 23S rRNA, where it nucleates assembly of the 50S subunit. Functionally, one of the proteins that surrounds the polypeptide exit tunnel on the outside of the subunit. The protein is Large ribosomal subunit protein uL24 of Cereibacter sphaeroides (strain ATCC 17029 / ATH 2.4.9) (Rhodobacter sphaeroides).